A 278-amino-acid chain; its full sequence is Cytoplasmic envelopment protein 1 (278 aa).

This sequence belongs to the herpesviridae cytoplasmic envelopment protein 1 family. In terms of assembly, interacts with BSRF1 tegument protein; the BBRF2-BSRF1 complexes oligomerize and might play a role in tethering the viral nucleocapsids to the host Golgi membrane during secondary envelopment.

The protein localises to the virion. Its subcellular location is the virion tegument. It is found in the host cytoplasm. The protein resides in the host Golgi apparatus. Functionally, plays a critical role in cytoplasmic virus egress. Participates in the final step of tegumentation and envelope acquisition within the host cytoplasm. This is Cytoplasmic envelopment protein 1 from Homo sapiens (Human).